Consider the following 221-residue polypeptide: MASRPLPPGRQEEENAKDSGRKPSPVRPRGCLPSIDEARPAGPGPAPASRRGSMLGLAASFSRRNSLVGPGAGPGGQRPSLGPVPPLGSRVSFSGLPLAPARWVAPSYRTEPVPGERWEAARAQRALEAALAAGLHDACYSSDEAARLVRELCEQVHVRLRELSPPRYKLVCSVVLGPRAGQGVHVVSRALWDVARDGLASVSYTNTSLFAVATVHGLYCE.

2 disordered regions span residues 1–52 (MASR…SRRG) and 65–87 (NSLVGPGAGPGGQRPSLGPVPPL). The span at 10-21 (RQEEENAKDSGR) shows a compositional bias: basic and acidic residues. The residue at position 66 (Ser66) is a Phosphoserine.

This sequence belongs to the dynein light chain Tctex-type family. Interacts with ENG/endoglin, TGFBR2 and TGFBR3. Interacts with PPP1CC. As to expression, ubiquitously expressed. Expressed in testis (at protein level).

The protein localises to the cell projection. The protein resides in the cilium. Its subcellular location is the flagellum. It localises to the cytoplasmic vesicle. It is found in the secretory vesicle. The protein localises to the acrosome. The protein resides in the cytoplasm. Its subcellular location is the cytoskeleton. It localises to the cilium axoneme. It is found in the nucleus. The protein localises to the microtubule organizing center. In Homo sapiens (Human), this protein is Dynein light chain Tctex-type 4.